Here is a 352-residue protein sequence, read N- to C-terminus: Phosphoribosylformylglycinamidine cyclo-ligase (352 aa).

It belongs to the AIR synthase family.

The protein resides in the cytoplasm. The catalysed reaction is 2-formamido-N(1)-(5-O-phospho-beta-D-ribosyl)acetamidine + ATP = 5-amino-1-(5-phospho-beta-D-ribosyl)imidazole + ADP + phosphate + H(+). It participates in purine metabolism; IMP biosynthesis via de novo pathway; 5-amino-1-(5-phospho-D-ribosyl)imidazole from N(2)-formyl-N(1)-(5-phospho-D-ribosyl)glycinamide: step 2/2. The sequence is that of Phosphoribosylformylglycinamidine cyclo-ligase from Stenotrophomonas maltophilia (strain R551-3).